The sequence spans 309 residues: 4-diphosphocytidyl-2-C-methyl-D-erythritol kinase (309 aa).

Lys-11 is a catalytic residue. An ATP-binding site is contributed by 94–104; sequence PVAAGLAGGSA. Residue Asp-136 is part of the active site.

This sequence belongs to the GHMP kinase family. IspE subfamily.

The catalysed reaction is 4-CDP-2-C-methyl-D-erythritol + ATP = 4-CDP-2-C-methyl-D-erythritol 2-phosphate + ADP + H(+). It participates in isoprenoid biosynthesis; isopentenyl diphosphate biosynthesis via DXP pathway; isopentenyl diphosphate from 1-deoxy-D-xylulose 5-phosphate: step 3/6. Catalyzes the phosphorylation of the position 2 hydroxy group of 4-diphosphocytidyl-2C-methyl-D-erythritol. The sequence is that of 4-diphosphocytidyl-2-C-methyl-D-erythritol kinase from Synechococcus sp. (strain JA-3-3Ab) (Cyanobacteria bacterium Yellowstone A-Prime).